The chain runs to 351 residues: MMARNVLVSGGAGYIGSHTVLQLLLGGYSVVVVDNLDNSSAVSLQRVKKLAAEHGERLSFHQVDLRDRSALEKIFSETKFDAVIHFAGLKAVGESVEKPLLYYNNNLVGTITLLEVMAQHGCKNLVFSSSATVYGSPKEVPCTEEFPISALNPYGRTKLFIEEICRDVYGSDPEWKIILLRYFNPVGAHPSGDIGEDPRGIPNNLMPFVQQVAVGRRPHLTVFGNDYNTKDGTGVRDYIHVIDLADGHIAALRKLEDCKIGCEVYNLGTGNGTSVLEMVDAFEKASGKKIPLVIAGRRPGDAEVVYASTERAESELNWKAKYGIEEMCRDLWNWASNNPYGYDSSSEDNSH.

NAD(+) contacts are provided by residues 13–15 (GYI), 34–38 (DNLDN), 64–65 (DL), phenylalanine 86, and lysine 90. 130 to 132 (SAT) provides a ligand contact to substrate. Tyrosine 154 functions as the Proton acceptor in the catalytic mechanism. NAD(+)-binding residues include lysine 158 and tyrosine 182. Substrate is bound by residues 182–184 (YFN), 203–205 (NNL), 221–223 (TVF), arginine 236, and 298–301 (RPGD).

Belongs to the NAD(P)-dependent epimerase/dehydratase family. Forms homodimers and heterodimers. It depends on NAD(+) as a cofactor. Widely expressed.

It catalyses the reaction UDP-alpha-D-glucose = UDP-alpha-D-galactose. It participates in carbohydrate metabolism; galactose metabolism. Enhanced activity by NaCl. Inhibited by UDP. In terms of biological role, catalyzes the interconversion between UDP-glucose and UDP-galactose. This Arabidopsis thaliana (Mouse-ear cress) protein is UDP-glucose 4-epimerase 5.